Reading from the N-terminus, the 227-residue chain is MIQGDLVQIQELNNEIGRFLIEIARKAIKEEFKLDKLDLSNYNNPILDKKGLAFVTLEKITYNTSSLRGCIGYVEAVAPLKQIVASAAKAAAFSDPRFNPLQKDELSEIIIEVTVLTKPEEIKVKDRWDLPKIIKVGEDGLIVEKGILHSGLLLPQVPMEYCWDEETFLAETCIKASLEPDCWLDNSVRIKRFHGIIFRETRPDGSDIIVVKPSDIKCKLNELLNNF.

The AMMECR1 domain maps to 15–209; that stretch reads EIGRFLIEIA…ETRPDGSDII (195 aa).

This is Protein M1425_1941 from Saccharolobus islandicus (strain M.14.25 / Kamchatka #1) (Sulfolobus islandicus).